A 485-amino-acid chain; its full sequence is Trigger factor (485 aa).

The PPIase FKBP-type domain maps to 169–261 (GDVAIVDFVG…LKELKEKELP (93 aa)).

This sequence belongs to the FKBP-type PPIase family. Tig subfamily.

The protein resides in the cytoplasm. It catalyses the reaction [protein]-peptidylproline (omega=180) = [protein]-peptidylproline (omega=0). In terms of biological role, involved in protein export. Acts as a chaperone by maintaining the newly synthesized protein in an open conformation. Functions as a peptidyl-prolyl cis-trans isomerase. This Trichodesmium erythraeum (strain IMS101) protein is Trigger factor.